A 445-amino-acid chain; its full sequence is Glutamate-1-semialdehyde 2,1-aminomutase (445 aa).

At Lys-263 the chain carries N6-(pyridoxal phosphate)lysine.

Belongs to the class-III pyridoxal-phosphate-dependent aminotransferase family. HemL subfamily. Requires pyridoxal 5'-phosphate as cofactor.

The protein localises to the cytoplasm. The enzyme catalyses (S)-4-amino-5-oxopentanoate = 5-aminolevulinate. Its pathway is porphyrin-containing compound metabolism; protoporphyrin-IX biosynthesis; 5-aminolevulinate from L-glutamyl-tRNA(Glu): step 2/2. The sequence is that of Glutamate-1-semialdehyde 2,1-aminomutase from Halorubrum lacusprofundi (strain ATCC 49239 / DSM 5036 / JCM 8891 / ACAM 34).